Here is a 412-residue protein sequence, read N- to C-terminus: Serine hydroxymethyltransferase (412 aa).

(6S)-5,6,7,8-tetrahydrofolate is bound by residues Leu-117 and 121 to 123; that span reads GHL. The residue at position 226 (Lys-226) is an N6-(pyridoxal phosphate)lysine.

Belongs to the SHMT family. In terms of assembly, homodimer. It depends on pyridoxal 5'-phosphate as a cofactor.

The protein resides in the cytoplasm. It catalyses the reaction (6R)-5,10-methylene-5,6,7,8-tetrahydrofolate + glycine + H2O = (6S)-5,6,7,8-tetrahydrofolate + L-serine. It participates in one-carbon metabolism; tetrahydrofolate interconversion. It functions in the pathway amino-acid biosynthesis; glycine biosynthesis; glycine from L-serine: step 1/1. Its function is as follows. Catalyzes the reversible interconversion of serine and glycine with tetrahydrofolate (THF) serving as the one-carbon carrier. This reaction serves as the major source of one-carbon groups required for the biosynthesis of purines, thymidylate, methionine, and other important biomolecules. Also exhibits THF-independent aldolase activity toward beta-hydroxyamino acids, producing glycine and aldehydes, via a retro-aldol mechanism. In Staphylococcus epidermidis (strain ATCC 35984 / DSM 28319 / BCRC 17069 / CCUG 31568 / BM 3577 / RP62A), this protein is Serine hydroxymethyltransferase.